A 103-amino-acid polypeptide reads, in one-letter code: Phosphoribosyl-ATP pyrophosphatase (103 aa).

This sequence belongs to the PRA-PH family.

Its subcellular location is the cytoplasm. It carries out the reaction 1-(5-phospho-beta-D-ribosyl)-ATP + H2O = 1-(5-phospho-beta-D-ribosyl)-5'-AMP + diphosphate + H(+). It participates in amino-acid biosynthesis; L-histidine biosynthesis; L-histidine from 5-phospho-alpha-D-ribose 1-diphosphate: step 2/9. The chain is Phosphoribosyl-ATP pyrophosphatase from Cereibacter sphaeroides (strain ATCC 17025 / ATH 2.4.3) (Rhodobacter sphaeroides).